Here is a 55-residue protein sequence, read N- to C-terminus: Beta-toxin Cn7 (55 aa).

The region spanning 1-55 (KEGYIVNYHDGCKYECYKLGDNDYCLRECKLRVGKGAGGYCYAFACWCTHLYEQA) is the LCN-type CS-alpha/beta domain. Disulfide bonds link C16–C41, C25–C46, and C29–C48.

It belongs to the long (3 C-C) scorpion toxin superfamily. Sodium channel inhibitor family. Beta subfamily. In terms of tissue distribution, expressed by the venom gland.

It is found in the secreted. Its function is as follows. Beta toxins bind voltage-independently at site-4 of sodium channels (Nav) and shift the voltage of activation toward more negative potentials thereby affecting sodium channel activation and promoting spontaneous and repetitive firing. This is Beta-toxin Cn7 from Centruroides noxius (Mexican scorpion).